The following is a 143-amino-acid chain: Large ribosomal subunit protein uL13 (143 aa).

This sequence belongs to the universal ribosomal protein uL13 family. As to quaternary structure, part of the 50S ribosomal subunit.

Its function is as follows. This protein is one of the early assembly proteins of the 50S ribosomal subunit, although it is not seen to bind rRNA by itself. It is important during the early stages of 50S assembly. This Dichelobacter nodosus (strain VCS1703A) protein is Large ribosomal subunit protein uL13.